We begin with the raw amino-acid sequence, 572 residues long: Proline--tRNA ligase (572 aa).

This sequence belongs to the class-II aminoacyl-tRNA synthetase family. ProS type 1 subfamily. As to quaternary structure, homodimer.

The protein localises to the cytoplasm. It carries out the reaction tRNA(Pro) + L-proline + ATP = L-prolyl-tRNA(Pro) + AMP + diphosphate. Its function is as follows. Catalyzes the attachment of proline to tRNA(Pro) in a two-step reaction: proline is first activated by ATP to form Pro-AMP and then transferred to the acceptor end of tRNA(Pro). As ProRS can inadvertently accommodate and process non-cognate amino acids such as alanine and cysteine, to avoid such errors it has two additional distinct editing activities against alanine. One activity is designated as 'pretransfer' editing and involves the tRNA(Pro)-independent hydrolysis of activated Ala-AMP. The other activity is designated 'posttransfer' editing and involves deacylation of mischarged Ala-tRNA(Pro). The misacylated Cys-tRNA(Pro) is not edited by ProRS. The protein is Proline--tRNA ligase of Citrobacter koseri (strain ATCC BAA-895 / CDC 4225-83 / SGSC4696).